The primary structure comprises 176 residues: uncharacterized protein (176 aa).

This is an uncharacterized protein from Dictyostelium discoideum (Social amoeba).